The sequence spans 861 residues: ATP-dependent helicase rhp16 (861 aa).

Residues 1-13 (MGTSCNKINSNSN) are compositionally biased toward polar residues. Positions 1–217 (MGTSCNKINS…KSIPSHERTH (217 aa)) are disordered. Composition is skewed to basic and acidic residues over residues 14–23 (KGKENMHFVL) and 38–57 (VERD…KEFE). The span at 60 to 82 (LSTNKKLIIQSNNTSSQHSTPPL) shows a compositional bias: polar residues. Low complexity predominate over residues 83 to 95 (SISDTSTHTGSST). Polar residues predominate over residues 96 to 106 (DNVEANPNTGF). Positions 109–123 (ARKRSLRSSNLKKKF) are enriched in basic residues. Acidic residues predominate over residues 131 to 145 (ESNESEFIDDDESDE). Over residues 193–204 (ARASSSASSSSR) the composition is skewed to low complexity. The Helicase ATP-binding domain occupies 268–442 (RQEDSSFGGG…FSLLRFLRAD (175 aa)). 281–288 (DEMGMGKT) lines the ATP pocket. The short motif at 393–396 (DEAH) is the DEAH box element. An RING-type zinc finger spans residues 609–652 (CKICDEVAQDAIESRCHHTFCRLCVTEYINAAGDGENVNCPSCF). Positions 695–848 (LVEELYLLRK…TIDQDEKALN (154 aa)) constitute a Helicase C-terminal domain.

The protein belongs to the SNF2/RAD54 helicase family.

Its subcellular location is the nucleus. Involved in global genome repair (GGR) via nucleotide excision repair (NER), in conjunction with rhp7, after UV irradiation. The sequence is that of ATP-dependent helicase rhp16 (rhp16) from Schizosaccharomyces pombe (strain 972 / ATCC 24843) (Fission yeast).